The following is a 162-amino-acid chain: Superoxide dismutase [Cu-Zn] (162 aa).

Positions M1–A20 are cleaved as a signal peptide. Cu cation-binding residues include H66, H68, and H83. An intrachain disulfide couples C73 to C158. Positions 83, 92, 100, and 103 each coordinate Zn(2+). H137 provides a ligand contact to Cu cation.

The protein belongs to the Cu-Zn superoxide dismutase family. Homodimer. Cu cation is required as a cofactor. Zn(2+) serves as cofactor.

It localises to the periplasm. The enzyme catalyses 2 superoxide + 2 H(+) = H2O2 + O2. Destroys radicals which are normally produced within the cells and which are toxic to biological systems. The polypeptide is Superoxide dismutase [Cu-Zn] (sodC) (Legionella pneumophila).